The sequence spans 229 residues: Putative N-acetylmannosamine-6-phosphate 2-epimerase (229 aa).

It belongs to the NanE family.

The catalysed reaction is an N-acyl-D-glucosamine 6-phosphate = an N-acyl-D-mannosamine 6-phosphate. Its pathway is amino-sugar metabolism; N-acetylneuraminate degradation; D-fructose 6-phosphate from N-acetylneuraminate: step 3/5. Its function is as follows. Converts N-acetylmannosamine-6-phosphate (ManNAc-6-P) to N-acetylglucosamine-6-phosphate (GlcNAc-6-P). In Salmonella agona (strain SL483), this protein is Putative N-acetylmannosamine-6-phosphate 2-epimerase.